The chain runs to 549 residues: Cation/acetate symporter ActP (549 aa).

The next 13 membrane-spanning stretches (helical) occupy residues 33 to 53 (WQAI…TYWA), 77 to 97 (LAIA…ALVF), 103 to 123 (GLIY…LIAE), 148 to 168 (ILSA…QMVG), 183 to 203 (IAVV…GMLA), 206 to 226 (WVQI…AFMV), 262 to 282 (ISAL…PHIL), 303 to 323 (GFMG…IMLV), 355 to 375 (LFLG…VAGL), 404 to 424 (VSKI…VLFE), 428 to 448 (IAFM…PIIL), 464 to 484 (GGWL…TIWV), and 493 to 513 (IFPY…GIWF).

Belongs to the sodium:solute symporter (SSF) (TC 2.A.21) family.

The protein resides in the cell inner membrane. Functionally, transports acetate. The polypeptide is Cation/acetate symporter ActP (Salmonella arizonae (strain ATCC BAA-731 / CDC346-86 / RSK2980)).